A 242-amino-acid polypeptide reads, in one-letter code: Small ribosomal subunit protein uS2 (242 aa).

This sequence belongs to the universal ribosomal protein uS2 family.

This chain is Small ribosomal subunit protein uS2, found in Shewanella denitrificans (strain OS217 / ATCC BAA-1090 / DSM 15013).